A 158-amino-acid chain; its full sequence is Urease accessory protein UreE (158 aa).

Belongs to the UreE family.

It localises to the cytoplasm. Involved in urease metallocenter assembly. Binds nickel. Probably functions as a nickel donor during metallocenter assembly. This chain is Urease accessory protein UreE, found in Corynebacterium urealyticum (strain ATCC 43042 / DSM 7109).